A 185-amino-acid polypeptide reads, in one-letter code: Ribosome-recycling factor (185 aa).

The protein belongs to the RRF family.

Its subcellular location is the cytoplasm. In terms of biological role, responsible for the release of ribosomes from messenger RNA at the termination of protein biosynthesis. May increase the efficiency of translation by recycling ribosomes from one round of translation to another. The chain is Ribosome-recycling factor from Geobacter metallireducens (strain ATCC 53774 / DSM 7210 / GS-15).